Consider the following 153-residue polypeptide: Transcriptional repressor NrdR (153 aa).

A zinc finger spans residues Cys-3–Cys-34. An ATP-cone domain is found at Tyr-49–Ala-139.

This sequence belongs to the NrdR family. Requires Zn(2+) as cofactor.

In terms of biological role, negatively regulates transcription of bacterial ribonucleotide reductase nrd genes and operons by binding to NrdR-boxes. The chain is Transcriptional repressor NrdR from Solibacter usitatus (strain Ellin6076).